We begin with the raw amino-acid sequence, 355 residues long: Peptide chain release factor 1 (355 aa).

N5-methylglutamine is present on glutamine 231.

The protein belongs to the prokaryotic/mitochondrial release factor family. Methylated by PrmC. Methylation increases the termination efficiency of RF1.

It is found in the cytoplasm. In terms of biological role, peptide chain release factor 1 directs the termination of translation in response to the peptide chain termination codons UAG and UAA. This is Peptide chain release factor 1 from Sulfurovum sp. (strain NBC37-1).